The chain runs to 244 residues: RNA transcription, translation and transport factor protein (244 aa).

N6-acetyllysine occurs at positions 20, 62, and 98.

This sequence belongs to the RTRAF family. As to quaternary structure, homodimer. Interacts with FAM98A (via N- and C-terminus). Interacts with NIN; which may prevent phosphorylation of NIN. Interacts with POLR2A. Component of a tRNA-splicing ligase complex.

Its subcellular location is the nucleus. It localises to the cytoplasm. The protein resides in the cytosol. It is found in the perinuclear region. The protein localises to the cytoskeleton. Its subcellular location is the microtubule organizing center. It localises to the centrosome. In terms of biological role, RNA-binding protein involved in modulation of mRNA transcription by Polymerase II. Component of the tRNA-splicing ligase complex and is required for tRNA ligation. May be required for RNA transport. This is RNA transcription, translation and transport factor protein from Mus musculus (Mouse).